The following is a 390-amino-acid chain: S-adenosylmethionine synthase (390 aa).

His15 contributes to the ATP binding site. Residue Asp17 participates in Mg(2+) binding. Glu43 contributes to the K(+) binding site. L-methionine-binding residues include Glu56 and Gln99. The segment at 99-109 (QSPDINQGVDR) is flexible loop. Residues 164–166 (DAK), 230–231 (RF), Asp239, 245–246 (RK), Ala262, and Lys266 each bind ATP. Asp239 contacts L-methionine. Lys270 contacts L-methionine.

Belongs to the AdoMet synthase family. In terms of assembly, homotetramer; dimer of dimers. Requires Mg(2+) as cofactor. K(+) serves as cofactor.

The protein resides in the cytoplasm. It catalyses the reaction L-methionine + ATP + H2O = S-adenosyl-L-methionine + phosphate + diphosphate. It functions in the pathway amino-acid biosynthesis; S-adenosyl-L-methionine biosynthesis; S-adenosyl-L-methionine from L-methionine: step 1/1. Its function is as follows. Catalyzes the formation of S-adenosylmethionine (AdoMet) from methionine and ATP. The overall synthetic reaction is composed of two sequential steps, AdoMet formation and the subsequent tripolyphosphate hydrolysis which occurs prior to release of AdoMet from the enzyme. The chain is S-adenosylmethionine synthase from Photorhabdus laumondii subsp. laumondii (strain DSM 15139 / CIP 105565 / TT01) (Photorhabdus luminescens subsp. laumondii).